We begin with the raw amino-acid sequence, 907 residues long: Translation initiation factor IF-2 (907 aa).

Basic and acidic residues-rich tracts occupy residues 223–235 (LAQR…KRAA), 251–263 (VAKE…EKNA), and 270–281 (GGKDWNDSDGKK). The tract at residues 223 to 320 (LAQRRQEEAK…ENQQHAFTAP (98 aa)) is disordered. One can recognise a tr-type G domain in the interval 407 to 576 (PRPPVVTVMG…LLQAEVLELK (170 aa)). The segment at 416 to 423 (GHVDHGKT) is G1. 416-423 (GHVDHGKT) is a binding site for GTP. The segment at 441 to 445 (GITQH) is G2. The G3 stretch occupies residues 462–465 (DTPG). Residues 462 to 466 (DTPGH) and 516 to 519 (NKID) contribute to the GTP site. The G4 stretch occupies residues 516-519 (NKID). The interval 552 to 554 (SAK) is G5.

Belongs to the TRAFAC class translation factor GTPase superfamily. Classic translation factor GTPase family. IF-2 subfamily.

Its subcellular location is the cytoplasm. Its function is as follows. One of the essential components for the initiation of protein synthesis. Protects formylmethionyl-tRNA from spontaneous hydrolysis and promotes its binding to the 30S ribosomal subunits. Also involved in the hydrolysis of GTP during the formation of the 70S ribosomal complex. This chain is Translation initiation factor IF-2, found in Methylobacillus flagellatus (strain ATCC 51484 / DSM 6875 / VKM B-1610 / KT).